The chain runs to 140 residues: uncharacterized protein (140 aa).

4 helical membrane passes run 4 to 24 (LLLA…SFSG), 56 to 76 (EAFI…YLLW), 84 to 104 (SAAA…LFFS), and 109 to 129 (IRDV…YVLA).

It is found in the cell membrane. Its function is as follows. May be important for peptidoglycan remodeling. This is an uncharacterized protein from Bacillus subtilis (strain 168).